Consider the following 140-residue polypeptide: Cell division protein SepF (140 aa).

Positions aspartate 15 to glutamine 47 are disordered.

The protein belongs to the SepF family. In terms of assembly, homodimer. Interacts with FtsZ.

It localises to the cytoplasm. In terms of biological role, cell division protein that is part of the divisome complex and is recruited early to the Z-ring. Probably stimulates Z-ring formation, perhaps through the cross-linking of FtsZ protofilaments. Its function overlaps with FtsA. In Lactiplantibacillus plantarum (strain ATCC BAA-793 / NCIMB 8826 / WCFS1) (Lactobacillus plantarum), this protein is Cell division protein SepF.